The primary structure comprises 520 residues: Sodium-dependent dicarboxylate transporter SdcS (520 aa).

14 helical membrane-spanning segments follow: residues 30–50, 55–75, 77–97, 104–124, 160–180, 207–227, 242–262, 298–318, 323–343, 362–382, 399–419, 428–448, 452–472, and 491–511; these read AGQLIGLILGPLLFLLTLLFF, LPWKGVYVLAITLWIATWWIT, AIPIAATSLLPIVLLPLGHIL, SEYGNDIIFLFLGGFILAIAM, SMFVSNTAAVMIMIPIGLAII, IGYAGTIGGLGTLIGTPPLII, FAKWMIVGIPTVIVLLGITWL, KVVQTIFVLASLLWITREFLL, VTSSVADGTIAIFISILLFII, ELPWGVLILFGGGLALAKGIS, GVSPILIVIVITIFVLFLTEV, MILPILATLSVAVGVHPLLLM, AMAANCAYMLPVGTPPNAIIF, and LISAIIIILVVYYVMPIVLGI.

It belongs to the SLC13A/DASS transporter (TC 2.A.47) family. NADC subfamily.

The protein resides in the cell membrane. Mediates the transport of the dicarboxylates fumarate, malate, and succinate across the cytoplasmic membrane via a Na(+)-electrochemical gradient. The sequence is that of Sodium-dependent dicarboxylate transporter SdcS (sdcS) from Staphylococcus aureus (strain USA300).